The sequence spans 462 residues: Exodeoxyribonuclease 7 large subunit (462 aa).

This sequence belongs to the XseA family. In terms of assembly, heterooligomer composed of large and small subunits.

The protein localises to the cytoplasm. It carries out the reaction Exonucleolytic cleavage in either 5'- to 3'- or 3'- to 5'-direction to yield nucleoside 5'-phosphates.. In terms of biological role, bidirectionally degrades single-stranded DNA into large acid-insoluble oligonucleotides, which are then degraded further into small acid-soluble oligonucleotides. The chain is Exodeoxyribonuclease 7 large subunit from Pectobacterium carotovorum subsp. carotovorum (strain PC1).